The following is a 658-amino-acid chain: Putative endo-beta-N-acetylglucosaminidase (658 aa).

The first 23 residues, 1-23 (MKKVRFIFLALLFFLASPEGAMA), serve as a signal peptide directing secretion. 13 Cell wall-binding repeats span residues 42–63 (ANEWVFDTHYQSWFYIKADANY), 65–84 (ENEWLKQGDDYFYLKSGGYM), 86–105 (KSEWVEDKGAFYYLDQDGKM), 124–145 (IEDWVYDSQYDAWFYIKADGQH), 147–166 (EKEWLQIKGKDYYFKSGGYL), 185–206 (QQGWLFDKQYQSWFYIKENGNY), 208–227 (DKEWIFENGHYYYLKSGGYM), 229–248 (ANEWIWDKESWFYLKFDGKM), 250–271 (EKEWVYDSHSQAWYYFKSGGYM), 273–292 (ANEWIWDKESWFYLKSDGKI), 294–315 (EKEWVYDSHSQAWYYFKSGGYM), 317–336 (ANEWIWDKESWFYLKSDGKI), and 338–359 (EKEWVYDSHSQAWYYFKSGGYM).

This sequence belongs to the glycosyl hydrolase 73 family.

Its subcellular location is the secreted. It carries out the reaction an N(4)-(oligosaccharide-(1-&gt;3)-[oligosaccharide-(1-&gt;6)]-beta-D-Man-(1-&gt;4)-beta-D-GlcNAc-(1-&gt;4)-alpha-D-GlcNAc)-L-asparaginyl-[protein] + H2O = an oligosaccharide-(1-&gt;3)-[oligosaccharide-(1-&gt;6)]-beta-D-Man-(1-&gt;4)-D-GlcNAc + N(4)-(N-acetyl-beta-D-glucosaminyl)-L-asparaginyl-[protein]. Functionally, plays an important role in cell wall degradation and cell separation. The sequence is that of Putative endo-beta-N-acetylglucosaminidase (lytB) from Streptococcus pneumoniae serotype 4 (strain ATCC BAA-334 / TIGR4).